An 83-amino-acid chain; its full sequence is MAELGEADEAELQRLVAAEQQKAQFTAQVHHFMELCWDKCVEKPGNRLDSRTENCLSSCVDRFIDTTLAITSRFAQIVQKGGQ.

Position 2 is an N-acetylalanine (alanine 2). The Twin CX3C motif motif lies at 36 to 59 (CWDKCVEKPGNRLDSRTENCLSSC). Intrachain disulfides connect cysteine 36/cysteine 59 and cysteine 40/cysteine 55.

The protein belongs to the small Tim family. Heterohexamer; possibly composed of 3 copies of TIMM8B and 3 copies of TIMM13, named soluble 70 kDa complex. Associates with the TIM22 complex, whose core is composed of TIMM22. As to expression, ubiquitous, with highest expression in heart, kidney, liver and skeletal muscle.

The protein localises to the mitochondrion inner membrane. Functionally, probable mitochondrial intermembrane chaperone that participates in the import and insertion of some multi-pass transmembrane proteins into the mitochondrial inner membrane. Also required for the transfer of beta-barrel precursors from the TOM complex to the sorting and assembly machinery (SAM complex) of the outer membrane. Acts as a chaperone-like protein that protects the hydrophobic precursors from aggregation and guide them through the mitochondrial intermembrane space. This Homo sapiens (Human) protein is Mitochondrial import inner membrane translocase subunit Tim8 B (TIMM8B).